A 294-amino-acid polypeptide reads, in one-letter code: Ribosomal RNA small subunit methyltransferase H (294 aa).

S-adenosyl-L-methionine contacts are provided by residues Gly36–His38, Asp55, Phe82, Asp97, and Gln104.

Belongs to the methyltransferase superfamily. RsmH family.

It localises to the cytoplasm. The catalysed reaction is cytidine(1402) in 16S rRNA + S-adenosyl-L-methionine = N(4)-methylcytidine(1402) in 16S rRNA + S-adenosyl-L-homocysteine + H(+). In terms of biological role, specifically methylates the N4 position of cytidine in position 1402 (C1402) of 16S rRNA. This is Ribosomal RNA small subunit methyltransferase H from Synechococcus sp. (strain CC9605).